The chain runs to 740 residues: Death domain-associated protein 6 (740 aa).

A disordered region spans residues 1 to 55 (MATANSIIVLDDDDEDEAAAQPGPSHPLPNAASPGAEAPSSSEPHGARGSSSSGG). The interval 1–160 (MATANSIIVL…TSNEPSGNNP (160 aa)) is necessary for interaction with USP7 and ATRX. Ser-25 carries the post-translational modification Phosphoserine. Over residues 29–55 (PNAASPGAEAPSSSEPHGARGSSSSGG) the composition is skewed to low complexity. Residue Lys-142 forms a Glycyl lysine isopeptide (Lys-Gly) (interchain with G-Cter in SUMO2) linkage. Residues 147–185 (PAATTSNEPSGNNPPTHLSLDPTNAENTASQSPRTRGSR) are disordered. Residues 149-181 (ATTSNEPSGNNPPTHLSLDPTNAENTASQSPRT) show a composition bias toward polar residues. A phosphoserine mark is found at Ser-178 and Ser-213. Coiled-coil stretches lie at residues 180-217 (RTRG…ELDD) and 358-399 (ARRL…ARLQ). The segment at 183-417 (GSRRQIQRLE…TPEASLDSGE (235 aa)) is interaction with histone H3.3. A necessary for interaction with USP7 region spans residues 347-570 (GVDPALSDPV…SPVSQLFELE (224 aa)). Positions 384 to 724 (DKSEEGERKK…PRPGTCKTSV (341 aa)) are disordered. Residues 391 to 395 (RKKRR) carry the Nuclear localization signal motif. 2 positions are modified to phosphoserine: Ser-412 and Ser-424. Residues 430 to 489 (ASRAETDDEDDEESDEEEEEEEEEEEEEATDSEEEEDLEQMQEGQEDDEEEDEEEEAAAG) adopt a coiled-coil conformation. Acidic residues predominate over residues 435–486 (TDDEDDEESDEEEEEEEEEEEEEATDSEEEEDLEQMQEGQEDDEEEDEEEEA). Thr-459 bears the Phosphothreonine mark. Ser-495 and Ser-498 each carry phosphoserine. Polar residues predominate over residues 496–505 (PMSSLQISNE). The interval 501–625 (QISNEKNLEP…GVSPHNWGDS (125 aa)) is interaction with MAP3K5. Lys-512 carries the N6-acetyllysine modification. Positions 514–524 (ISRSSGEQQNK) are enriched in polar residues. The span at 529–542 (SPSLLSEEPLAPSS) shows a compositional bias: low complexity. The segment covering 551–561 (QPEELTLEEES) has biased composition (acidic residues). 2 positions are modified to phosphoserine: Ser-561 and Ser-580. A compositionally biased stretch (polar residues) spans 578-590 (TPSSVETDISSSR). The interaction with SPOP stretch occupies residues 626-740 (GPPCKKSRKE…EEIIVLSDSD (115 aa)). (Microbial infection) Interaction with Puumala hantavirus nucleoprotein regions lie at residues 627–634 (PPCKKSRK) and 658–663 (KNGKKI). A Nuclear localization signal motif is present at residues 628–634 (PCKKSRK). Glycyl lysine isopeptide (Lys-Gly) (interchain with G-Cter in SUMO1) cross-links involve residues Lys-630 and Lys-631. The span at 650–660 (ERQRSVHEKNG) shows a compositional bias: basic and acidic residues. Ser-668 and Ser-671 each carry phosphoserine. Low complexity predominate over residues 673-683 (LASLAPVADSS). A phosphoserine mark is found at Ser-688, Ser-702, Ser-737, and Ser-739. Residues 693 to 711 (LVTSSLCIPSPARLSQTPH) are compositionally biased toward polar residues. A sumo interaction motif (SIM) region spans residues 733 to 740 (IIVLSDSD).

Belongs to the DAXX family. As to quaternary structure, homomultimer. Interacts (via C-terminus) with TNFRSF6 (via death domain). Interacts with PAX5, SLC2A4/GLUT4, MAP3K5, TGFBR2, phosphorylated dimeric HSPB1/HSP27, CENPC, ETS1, sumoylated PML, UBE2I, MCRS1 and TP53. Interacts (via N-terminus) with HIPK2 and HIPK3. Interacts with HIPK1, which induces translocation from PML/POD/ND10 nuclear bodies to chromatin and enhances association with HDAC1. Interacts (non-phosphorylated) with PAX3, PAX7, DEK, HDAC1, HDAC2, HDAC3, acetylated histone H4 and histones H2A, H2B, H3, H3.3 and H4. Interacts with SPOP; mediating CUL3-dependent proteasomal degradation. Interacts with CBP; the interaction is dependent the sumoylation of CBP and suppresses CBP transcriptional activity via recruitment of HDAC2 directly in the complex with TP53 and HIPK2. Interacts with AXIN1; the interaction stimulates the interaction of DAXX with TP53, stimulates 'Ser-46' phosphorylation of TP53 on and induces cell death on UV irradiation. Interacts with MDM2; the interaction is direct. Interacts with USP7; the interaction is direct and independent of MDM2 and TP53. Part of a complex with DAXX, MDM2 and USP7 under non-stress conditions. Interacts (via N-terminus) with RASSF1 (via C-terminus); the interaction is independent of MDM2 and TP53; RASSF1 isoform A disrupts interactions among MDM2, DAXX and USP7, thus contributing to the efficient activation of TP53 by promoting MDM2 self-ubiquitination in cell-cycle checkpoint control in response to DNA damage. Interacts with ATRX to form the chromatin remodeling complex ATRX:DAXX. Interacts with HSF1 (via homotrimeric form preferentially); this interaction relieves homotrimeric HSF1 from repression of its transcriptional activity by HSP90-dependent multichaperone complex upon heat shock. Interacts with SUMO1P1/SUMO5. (Microbial infection) Interacts with human cytomegalovirus/HHV-5 tegument phosphoprotein pp71 and protein UL123. In terms of assembly, (Microbial infection) Interacts with Epstein-Barr virus protein BNRF1. As to quaternary structure, (Microbial infection) Interacts with human adenovirus 5 E1B-55K protein; this interaction might alterate the normal interactions of DAXX, PML, and TP53, which may contribute to cell transformation. (Microbial infection) Interacts with Puumala hantavirus nucleoprotein. In terms of processing, sumoylated with SUMO1 on multiple lysine residues. Phosphorylated by HIPK1 upon glucose deprivation. Post-translationally, polyubiquitinated; which is promoted by CUL3 and SPOP and results in proteasomal degradation. Ubiquitinated by MDM2; inducing its degradation. Deubiquitinated by USP7; leading to stabilize it. As to expression, ubiquitous.

It localises to the cytoplasm. Its subcellular location is the nucleus. The protein resides in the nucleoplasm. It is found in the PML body. The protein localises to the nucleolus. It localises to the chromosome. Its subcellular location is the centromere. In terms of biological role, transcription corepressor known to repress transcriptional potential of several sumoylated transcription factors. Down-regulates basal and activated transcription. Its transcription repressor activity is modulated by recruiting it to subnuclear compartments like the nucleolus or PML/POD/ND10 nuclear bodies through interactions with MCSR1 and PML, respectively. Seems to regulate transcription in PML/POD/ND10 nuclear bodies together with PML and may influence TNFRSF6-dependent apoptosis thereby. Inhibits transcriptional activation of PAX3 and ETS1 through direct protein-protein interactions. Modulates PAX5 activity; the function seems to involve CREBBP. Acts as an adapter protein in a MDM2-DAXX-USP7 complex by regulating the RING-finger E3 ligase MDM2 ubiquitination activity. Under non-stress condition, in association with the deubiquitinating USP7, prevents MDM2 self-ubiquitination and enhances the intrinsic E3 ligase activity of MDM2 towards TP53, thereby promoting TP53 ubiquitination and subsequent proteasomal degradation. Upon DNA damage, its association with MDM2 and USP7 is disrupted, resulting in increased MDM2 autoubiquitination and consequently, MDM2 degradation, which leads to TP53 stabilization. Acts as a histone chaperone that facilitates deposition of histone H3.3. Acts as a targeting component of the chromatin remodeling complex ATRX:DAXX which has ATP-dependent DNA translocase activity and catalyzes the replication-independent deposition of histone H3.3 in pericentric DNA repeats outside S-phase and telomeres, and the in vitro remodeling of H3.3-containing nucleosomes. Does not affect the ATPase activity of ATRX but alleviates its transcription repression activity. Upon neuronal activation associates with regulatory elements of selected immediate early genes where it promotes deposition of histone H3.3 which may be linked to transcriptional induction of these genes. Required for the recruitment of histone H3.3:H4 dimers to PML-nuclear bodies (PML-NBs); the process is independent of ATRX and facilitated by ASF1A; PML-NBs are suggested to function as regulatory sites for the incorporation of newly synthesized histone H3.3 into chromatin. In case of overexpression of centromeric histone variant CENPA (as found in various tumors) is involved in its mislocalization to chromosomes; the ectopic localization involves a heterotypic tetramer containing CENPA, and histones H3.3 and H4 and decreases binding of CTCF to chromatin. Proposed to mediate activation of the JNK pathway and apoptosis via MAP3K5 in response to signaling from TNFRSF6 and TGFBR2. Interaction with HSPB1/HSP27 may prevent interaction with TNFRSF6 and MAP3K5 and block DAXX-mediated apoptosis. In contrast, in lymphoid cells JNC activation and TNFRSF6-mediated apoptosis may not involve DAXX. Shows restriction activity towards human cytomegalovirus (HCMV). Plays a role as a positive regulator of the heat shock transcription factor HSF1 activity during the stress protein response. This is Death domain-associated protein 6 (DAXX) from Homo sapiens (Human).